A 189-amino-acid chain; its full sequence is Molybdopterin synthase catalytic subunit (189 aa).

The span at 1–30 (MSSLEISNSCFSPETRSPSSRQSVEDNASE) shows a compositional bias: polar residues. Residues 1–41 (MSSLEISNSCFSPETRSPSSRQSVEDNASEPSGKDVDDVQE) are disordered. The residue at position 20 (S20) is a Phosphoserine. Positions 32-41 (SGKDVDDVQE) are enriched in basic and acidic residues. Substrate-binding positions include 143-144 (HR), K159, and 166-168 (KKE).

This sequence belongs to the MoaE family. MOCS2B subfamily. In terms of assembly, heterotetramer; composed of 2 small (MOCS2A) and 2 large (MOCS2B) subunits.

It localises to the cytoplasm. It is found in the cytosol. It catalyses the reaction 2 [molybdopterin-synthase sulfur-carrier protein]-C-terminal-Gly-aminoethanethioate + cyclic pyranopterin phosphate + H2O = molybdopterin + 2 [molybdopterin-synthase sulfur-carrier protein]-C-terminal Gly-Gly + 2 H(+). It functions in the pathway cofactor biosynthesis; molybdopterin biosynthesis. Functionally, catalytic subunit of the molybdopterin synthase complex, a complex that catalyzes the conversion of precursor Z into molybdopterin. Acts by mediating the incorporation of 2 sulfur atoms from thiocarboxylated MOCS2A into precursor Z to generate a dithiolene group. This is Molybdopterin synthase catalytic subunit from Mus musculus (Mouse).